We begin with the raw amino-acid sequence, 256 residues long: Stanniocalcin (256 aa).

An N-terminal signal peptide occupies residues Met-1–Ala-18. Residues Thr-19–Arg-33 constitute a propeptide that is removed on maturation. Asn-62 is a glycosylation site (N-linked (GlcNAc...) asparagine).

It belongs to the stanniocalcin family. As to quaternary structure, homodimer; disulfide-linked. Produced and secreted by the corpuscles of Stannius.

The protein localises to the secreted. In terms of biological role, its primary function is the prevention of hypercalcemia. Upon release into the circulation, it lowers calcium transport by the gills, thereby reducing its rate of influx from the environment into the extracellular compartment. STC also stimulates phosphate reabsorption by renal proximal tubules. The consequence of this action is increased levels of plasma phosphate, which combines with excess calcium and promotes its disposal into bone and scales. The polypeptide is Stanniocalcin (stc) (Oncorhynchus kisutch (Coho salmon)).